A 287-amino-acid polypeptide reads, in one-letter code: Small ribosomal subunit protein uS10m (287 aa).

The transit peptide at 1 to 33 directs the protein to the mitochondrion; sequence MSLFSPHRILLRTGSAFQLATATRALLSTSSQL. The segment covering 33–43 has biased composition (polar residues); it reads LRNTKNAQSGL. The disordered stretch occupies residues 33–84; that stretch reads LRNTKNAQSGLAEQARAEEPVASSPSQTTRPEQKSLEEETTKQTQTHADSTV. Over residues 63-73 the composition is skewed to basic and acidic residues; that stretch reads PEQKSLEEETT. The span at 74–84 shows a compositional bias: polar residues; it reads KQTQTHADSTV.

Belongs to the universal ribosomal protein uS10 family. Part of the mitochondrial small ribosomal subunit.

It localises to the mitochondrion. Its function is as follows. Involved in mitochondrial genome encoded proteins translation. Involved in the binding of tRNA to the ribosomes. This is Small ribosomal subunit protein uS10m (rsm10) from Emericella nidulans (strain FGSC A4 / ATCC 38163 / CBS 112.46 / NRRL 194 / M139) (Aspergillus nidulans).